We begin with the raw amino-acid sequence, 158 residues long: 2-C-methyl-D-erythritol 2,4-cyclodiphosphate synthase (158 aa).

A divalent metal cation contacts are provided by D9 and H11. Residues 9 to 11 (DVH) and 35 to 36 (HS) each bind 4-CDP-2-C-methyl-D-erythritol 2-phosphate. Residue H43 coordinates a divalent metal cation. 4-CDP-2-C-methyl-D-erythritol 2-phosphate contacts are provided by residues 57-59 (DIG), 62-66 (FPDTD), 133-136 (TTTE), F140, and R143.

This sequence belongs to the IspF family. Homotrimer. It depends on a divalent metal cation as a cofactor.

It carries out the reaction 4-CDP-2-C-methyl-D-erythritol 2-phosphate = 2-C-methyl-D-erythritol 2,4-cyclic diphosphate + CMP. It participates in isoprenoid biosynthesis; isopentenyl diphosphate biosynthesis via DXP pathway; isopentenyl diphosphate from 1-deoxy-D-xylulose 5-phosphate: step 4/6. Its function is as follows. Involved in the biosynthesis of isopentenyl diphosphate (IPP) and dimethylallyl diphosphate (DMAPP), two major building blocks of isoprenoid compounds. Catalyzes the conversion of 4-diphosphocytidyl-2-C-methyl-D-erythritol 2-phosphate (CDP-ME2P) to 2-C-methyl-D-erythritol 2,4-cyclodiphosphate (ME-CPP) with a corresponding release of cytidine 5-monophosphate (CMP). In Actinobacillus succinogenes (strain ATCC 55618 / DSM 22257 / CCUG 43843 / 130Z), this protein is 2-C-methyl-D-erythritol 2,4-cyclodiphosphate synthase.